The primary structure comprises 418 residues: Serine hydroxymethyltransferase (418 aa).

(6S)-5,6,7,8-tetrahydrofolate contacts are provided by residues L121 and 125 to 127; that span reads GHL. At K230 the chain carries N6-(pyridoxal phosphate)lysine. 356–358 is a binding site for (6S)-5,6,7,8-tetrahydrofolate; sequence SPF.

The protein belongs to the SHMT family. In terms of assembly, homodimer. Requires pyridoxal 5'-phosphate as cofactor.

Its subcellular location is the cytoplasm. It carries out the reaction (6R)-5,10-methylene-5,6,7,8-tetrahydrofolate + glycine + H2O = (6S)-5,6,7,8-tetrahydrofolate + L-serine. It functions in the pathway one-carbon metabolism; tetrahydrofolate interconversion. The protein operates within amino-acid biosynthesis; glycine biosynthesis; glycine from L-serine: step 1/1. In terms of biological role, catalyzes the reversible interconversion of serine and glycine with tetrahydrofolate (THF) serving as the one-carbon carrier. This reaction serves as the major source of one-carbon groups required for the biosynthesis of purines, thymidylate, methionine, and other important biomolecules. Also exhibits THF-independent aldolase activity toward beta-hydroxyamino acids, producing glycine and aldehydes, via a retro-aldol mechanism. The sequence is that of Serine hydroxymethyltransferase from Pseudoalteromonas atlantica (strain T6c / ATCC BAA-1087).